A 243-amino-acid chain; its full sequence is MILGIDVGSTTTKMVLMEDSKIIWYKIEDIGVVIEEDILLKMVKEIEQKYPIDKIVATGYGRHKVSFADKIVPEVIALGKGANYFFNEADGVIDIGGQDTKVLKIDKNGKVVDFILSDKCAAGTGKFLEKALDILKIDKNEINKYKSDNIAKISSMCAVFAESEIISLLSKKVPKEGILMGVYESIINRVIPMTNRLKIQNIVFSGGVAKNKVLVEMFEKKLNKKLLIPKEPQIVCCVGAILV.

Cys120 and Cys157 together coordinate [4Fe-4S] cluster.

In terms of assembly, homodimer. [4Fe-4S] cluster is required as a cofactor.

This is an uncharacterized protein from Methanocaldococcus jannaschii (strain ATCC 43067 / DSM 2661 / JAL-1 / JCM 10045 / NBRC 100440) (Methanococcus jannaschii).